The sequence spans 1020 residues: RNA-binding protein 44 (1020 aa).

2 disordered regions span residues 1 to 23 (MQAT…GHLQ) and 50 to 70 (DGEG…NSSV). Residues 58–70 (TDERTNVKENSSV) show a composition bias toward basic and acidic residues. Phosphoserine occurs at positions 249, 371, 374, 516, 683, and 690. The RRM domain maps to 796–870 (FLIHVGGLCP…KSVNVRLVKI (75 aa)).

In terms of assembly, homodimer. Interacts with TEX14.

It localises to the cytoplasm. Component of intercellular bridges during meiosis. Intercellular bridges are evolutionarily conserved structures that connect differentiating germ cells. Not required for fertility. This chain is RNA-binding protein 44 (Rbm44), found in Rattus norvegicus (Rat).